The chain runs to 424 residues: Dihydroorotase (424 aa).

H58 and H60 together coordinate Zn(2+). Substrate-binding positions include 60–62, N92, and N276; that span reads HLR. D303 contributes to the Zn(2+) binding site. The active site involves D303. Substrate is bound by residues H307 and 321–322; that span reads FG.

Belongs to the metallo-dependent hydrolases superfamily. DHOase family. Class I DHOase subfamily. Zn(2+) is required as a cofactor.

The catalysed reaction is (S)-dihydroorotate + H2O = N-carbamoyl-L-aspartate + H(+). The protein operates within pyrimidine metabolism; UMP biosynthesis via de novo pathway; (S)-dihydroorotate from bicarbonate: step 3/3. Catalyzes the reversible cyclization of carbamoyl aspartate to dihydroorotate. The sequence is that of Dihydroorotase from Staphylococcus aureus (strain COL).